A 123-amino-acid chain; its full sequence is Ribosome-binding factor A (123 aa).

This sequence belongs to the RbfA family. Monomer. Binds 30S ribosomal subunits, but not 50S ribosomal subunits or 70S ribosomes.

It localises to the cytoplasm. One of several proteins that assist in the late maturation steps of the functional core of the 30S ribosomal subunit. Associates with free 30S ribosomal subunits (but not with 30S subunits that are part of 70S ribosomes or polysomes). Required for efficient processing of 16S rRNA. May interact with the 5'-terminal helix region of 16S rRNA. In Acetivibrio thermocellus (strain ATCC 27405 / DSM 1237 / JCM 9322 / NBRC 103400 / NCIMB 10682 / NRRL B-4536 / VPI 7372) (Clostridium thermocellum), this protein is Ribosome-binding factor A.